Here is a 438-residue protein sequence, read N- to C-terminus: Chromosomal replication initiator protein DnaA (438 aa).

Residues 1–71 (MTELDSLWEA…VEIVYQRTGQ (71 aa)) are domain I, interacts with DnaA modulators. A domain II region spans residues 71-101 (QEIRPDYVLATDPTPLAQTPPRPQSTFKEET). The segment at 81-100 (TDPTPLAQTPPRPQSTFKEE) is disordered. The interval 102–318 (PLNPEYTFQT…GALMRIRVFS (217 aa)) is domain III, AAA+ region. Positions 146, 148, 149, and 150 each coordinate ATP. Positions 319–438 (ELHQQPITLK…LVKLKNDLQA (120 aa)) are domain IV, binds dsDNA.

Belongs to the DnaA family. As to quaternary structure, oligomerizes as a right-handed, spiral filament on DNA at oriC.

The protein resides in the cytoplasm. Plays an essential role in the initiation and regulation of chromosomal replication. ATP-DnaA binds to the origin of replication (oriC) to initiate formation of the DNA replication initiation complex once per cell cycle. Binds the DnaA box (a 9 base pair repeat at the origin) and separates the double-stranded (ds)DNA. Forms a right-handed helical filament on oriC DNA; dsDNA binds to the exterior of the filament while single-stranded (ss)DNA is stabiized in the filament's interior. The ATP-DnaA-oriC complex binds and stabilizes one strand of the AT-rich DNA unwinding element (DUE), permitting loading of DNA polymerase. After initiation quickly degrades to an ADP-DnaA complex that is not apt for DNA replication. Binds acidic phospholipids. This chain is Chromosomal replication initiator protein DnaA, found in Limosilactobacillus fermentum (strain NBRC 3956 / LMG 18251) (Lactobacillus fermentum).